The primary structure comprises 743 residues: Merozoite surface protein 9 (743 aa).

The signal sequence occupies residues 1–23 (MMNMKIVLFSLLLFVIRWNIISC). Residues 77–235 (KELLKEKQYT…VNDEDDVNDE (159 aa)) form an interaction with MSP1 and host SLC4A1/Band 3 region. Disordered stretches follow at residues 202-282 (KSQG…ATAY), 459-487 (DNQA…PTED), 512-540 (NNTP…ENFD), and 666-743 (VDAL…EESK). Residues 211-224 (SQNQNENNDNQKYQ) show a composition bias toward polar residues. Tandem repeats lie at residues 226 to 231 (VNDEDD), 232 to 237 (VNDEED), 238 to 243 (TNDDED), 244 to 249 (TNDEED), 250 to 255 (TNDDED), 256 to 261 (TNDDED), 262 to 267 (TNDEED), and 268 to 273 (TNDEED). The segment at 226 to 273 (VNDEDDVNDEEDTNDDEDTNDEEDTNDDEDTNDDEDTNDEEDTNDEED) is 8 X 6 AA tandem repeats of [VT]-N-D-[ED]-[ED]-D. Residues 226–274 (VNDEDDVNDEEDTNDDEDTNDEEDTNDDEDTNDDEDTNDEEDTNDEEDH) are compositionally biased toward acidic residues. The interval 364–528 (LKDNLINYEF…PPTQSKKKNK (165 aa)) is interaction with MSP1 and host SLC4A1/Band 3. Over residues 459 to 473 (DNQAVDTKSMEEPKV) the composition is skewed to basic and acidic residues. Over residues 512–521 (NNTPNVVPPT) the composition is skewed to low complexity. A coiled-coil region spans residues 644–733 (NQETEEEMEK…QEEEEEEEIV (90 aa)). Over residues 672–721 (KNKEEEEKEKEKEEKEKEEKEKEKEEKEKEEKEKEEKEKEEKEEEKKEKE) the composition is skewed to basic and acidic residues. Positions 722 to 733 (EEQEEEEEEEIV) are enriched in acidic residues.

Belongs to the plasmodium ABRA family. As to quaternary structure, forms a complex composed of MSP1, MSP6, MSP7, MSP9 and MSP3; within the complex, MSP6 and MSP9 mediate the binding to the host erythrocyte. Interacts with MSP1 subunits p19 and p42; the interaction is direct. Interacts with host SLC4A1/Band 3 protein (via the 5ABC region). MSP1 subunits p19 or p42, and MSP9 form a co-ligand complex that interacts with host SLC4A1/Band 3 protein. In terms of processing, not glycosylated.

The protein resides in the cell membrane. It localises to the parasitophorous vacuole lumen. Its subcellular location is the secreted. Functionally, during the asexual blood stage, involved in the sialic acid-independent (SAID) merozoite invasion of host erythrocytes by binding to host SLC4A1/Band 3 protein on the surface of the host erythrocyte. The chain is Merozoite surface protein 9 from Plasmodium falciparum (isolate 3D7).